We begin with the raw amino-acid sequence, 90 residues long: Small ribosomal subunit protein bS20 (90 aa).

The segment covering 1-11 has biased composition (basic and acidic residues); sequence MANIKSSEKDI. Disordered stretches follow at residues 1–29 and 69–90; these read MANI…SRLR and SKNA…SAAA.

It belongs to the bacterial ribosomal protein bS20 family.

Binds directly to 16S ribosomal RNA. The polypeptide is Small ribosomal subunit protein bS20 (Leptospira borgpetersenii serovar Hardjo-bovis (strain L550)).